Here is a 360-residue protein sequence, read N- to C-terminus: Peptide chain release factor 1 (360 aa).

Position 235 is an N5-methylglutamine (Gln235). Over residues 284-295 (ERQEQAQADTRR) the composition is skewed to basic and acidic residues. The tract at residues 284 to 309 (ERQEQAQADTRRNLLGSGDRSDKIRT) is disordered.

The protein belongs to the prokaryotic/mitochondrial release factor family. Post-translationally, methylated by PrmC. Methylation increases the termination efficiency of RF1.

The protein resides in the cytoplasm. Peptide chain release factor 1 directs the termination of translation in response to the peptide chain termination codons UAG and UAA. This chain is Peptide chain release factor 1 (prfA), found in Pasteurella multocida (strain Pm70).